The primary structure comprises 92 residues: Small ribosomal subunit protein uS19 (92 aa).

Belongs to the universal ribosomal protein uS19 family.

Protein S19 forms a complex with S13 that binds strongly to the 16S ribosomal RNA. The sequence is that of Small ribosomal subunit protein uS19 from Variovorax paradoxus (strain S110).